Consider the following 299-residue polypeptide: N-carbamoylputrescine amidase (299 aa).

A CN hydrolase domain is found at 10–268 (VVVSSLQFAC…EAVLVAQFDL (259 aa)). Catalysis depends on E49, which acts as the Proton acceptor. K122 serves as the catalytic Proton donor. C159 functions as the Nucleophile in the catalytic mechanism.

This sequence belongs to the carbon-nitrogen hydrolase superfamily. As to quaternary structure, homooctamer (isoform 2). In terms of tissue distribution, expressed in roots, stems, leaves and flowers.

It catalyses the reaction N-carbamoylputrescine + H2O + 2 H(+) = putrescine + NH4(+) + CO2. The protein operates within amine and polyamine biosynthesis; putrescine biosynthesis via agmatine pathway; putrescine from N-carbamoylputrescine (amidase route): step 1/1. Involved in polyamine biosynthesis. Catalyzes the hydrolysis of N-carbamoylputrescine to produce putrescine and ammonia. In Arabidopsis thaliana (Mouse-ear cress), this protein is N-carbamoylputrescine amidase.